The chain runs to 235 residues: Glycerol-3-phosphate acyltransferase (235 aa).

A run of 6 helical transmembrane segments spans residues 4 to 24 (LLAI…IMAG), 56 to 76 (SVTL…VAFF), 94 to 114 (LLAG…GFKG), 125 to 145 (LIGI…LTVW), 152 to 172 (VASI…KYVF), and 191 to 211 (FHDS…LAIL).

It belongs to the PlsY family. As to quaternary structure, probably interacts with PlsX.

The protein localises to the cell inner membrane. It catalyses the reaction an acyl phosphate + sn-glycerol 3-phosphate = a 1-acyl-sn-glycero-3-phosphate + phosphate. The protein operates within lipid metabolism; phospholipid metabolism. In terms of biological role, catalyzes the transfer of an acyl group from acyl-phosphate (acyl-PO(4)) to glycerol-3-phosphate (G3P) to form lysophosphatidic acid (LPA). This enzyme utilizes acyl-phosphate as fatty acyl donor, but not acyl-CoA or acyl-ACP. The sequence is that of Glycerol-3-phosphate acyltransferase from Chlorobium luteolum (strain DSM 273 / BCRC 81028 / 2530) (Pelodictyon luteolum).